Reading from the N-terminus, the 236-residue chain is Small ribosomal subunit protein uS2c (236 aa).

It belongs to the universal ribosomal protein uS2 family.

The protein localises to the plastid. In Cuscuta exaltata (Tall dodder), this protein is Small ribosomal subunit protein uS2c (rps2).